The primary structure comprises 102 residues: RNA-binding protein Hfq (102 aa).

A Sm domain is found at 9 to 68; it reads DPFLNALRRERVPVSIYLVNGIKLQGQIESFDQFVILLKNTVSQMVYKHAISTVVPSRPV. The tract at residues 63-102 is disordered; sequence VPSRPVSHHSNNAGGGTSNNYHHGSNAQGSGAQQDSEETE. The segment covering 70–96 has biased composition (polar residues); that stretch reads HHSNNAGGGTSNNYHHGSNAQGSGAQQ.

This sequence belongs to the Hfq family. As to quaternary structure, homohexamer.

Its function is as follows. RNA chaperone that binds small regulatory RNA (sRNAs) and mRNAs to facilitate mRNA translational regulation in response to envelope stress, environmental stress and changes in metabolite concentrations. Also binds with high specificity to tRNAs. This is RNA-binding protein Hfq from Salmonella arizonae (strain ATCC BAA-731 / CDC346-86 / RSK2980).